We begin with the raw amino-acid sequence, 515 residues long: Alpha,alpha-trehalose-phosphate synthase [UDP-forming] 1 (515 aa).

Residues Tyr97 and Asp151 each contribute to the D-glucose 6-phosphate site. The UDP site is built by Arg287 and Lys292. Positions 287 and 292 each coordinate UDP-alpha-D-glucose. A D-glucose 6-phosphate-binding site is contributed by Arg325. UDP is bound by residues Val364 and 390–394; that span reads LVAYE. 386 to 394 provides a ligand contact to UDP-alpha-D-glucose; that stretch reads DGMNLVAYE. The disordered stretch occupies residues 483-515; sequence GKFQSRKAKLPESADAEKPMNGSGESEESQTTQ. The span at 491-500 shows a compositional bias: basic and acidic residues; sequence KLPESADAEK.

It belongs to the glycosyltransferase 20 family.

The enzyme catalyses D-glucose 6-phosphate + UDP-alpha-D-glucose = alpha,alpha-trehalose 6-phosphate + UDP + H(+). It participates in carbohydrate biosynthesis. Its function is as follows. Synthase catalytic subunit of the trehalose synthase complex that catalyzes the production of trehalose from glucose-6-phosphate and UDP-alpha-D-glucose in a two step process. The disaccharide trehalose serves as a storage carbohydrate that is mobilized during conidial germination. Regulates the level of trehalose as a protectant for cell integrity during thermal and oxidative stress. This chain is Alpha,alpha-trehalose-phosphate synthase [UDP-forming] 1, found in Aspergillus fumigatus (strain ATCC MYA-4609 / CBS 101355 / FGSC A1100 / Af293) (Neosartorya fumigata).